We begin with the raw amino-acid sequence, 423 residues long: Kynureninase (423 aa).

Residues Leu-105, Ser-106, 133 to 136 (FPSD), Asp-218, His-221, and Tyr-243 contribute to the pyridoxal 5'-phosphate site. An N6-(pyridoxal phosphate)lysine modification is found at Lys-244. Pyridoxal 5'-phosphate-binding residues include Trp-273 and Asn-301.

The protein belongs to the kynureninase family. Homodimer. It depends on pyridoxal 5'-phosphate as a cofactor.

The catalysed reaction is L-kynurenine + H2O = anthranilate + L-alanine + H(+). It catalyses the reaction 3-hydroxy-L-kynurenine + H2O = 3-hydroxyanthranilate + L-alanine + H(+). The protein operates within amino-acid degradation; L-kynurenine degradation; L-alanine and anthranilate from L-kynurenine: step 1/1. It participates in cofactor biosynthesis; NAD(+) biosynthesis; quinolinate from L-kynurenine: step 2/3. In terms of biological role, catalyzes the cleavage of L-kynurenine (L-Kyn) and L-3-hydroxykynurenine (L-3OHKyn) into anthranilic acid (AA) and 3-hydroxyanthranilic acid (3-OHAA), respectively. The polypeptide is Kynureninase (Xanthomonas oryzae pv. oryzae (strain KACC10331 / KXO85)).